Consider the following 138-residue polypeptide: Ribosomal RNA large subunit methyltransferase H (138 aa).

Residues Leu-57, Gly-86, and 105–110 (LSPLTF) each bind S-adenosyl-L-methionine.

The protein belongs to the RNA methyltransferase RlmH family. As to quaternary structure, homodimer.

It localises to the cytoplasm. The catalysed reaction is pseudouridine(1915) in 23S rRNA + S-adenosyl-L-methionine = N(3)-methylpseudouridine(1915) in 23S rRNA + S-adenosyl-L-homocysteine + H(+). Its function is as follows. Specifically methylates the pseudouridine at position 1915 (m3Psi1915) in 23S rRNA. The polypeptide is Ribosomal RNA large subunit methyltransferase H (Prochlorococcus marinus (strain MIT 9301)).